We begin with the raw amino-acid sequence, 615 residues long: 1-deoxy-D-xylulose-5-phosphate synthase (615 aa).

Thiamine diphosphate is bound by residues His72 and 113–115 (GHA). A Mg(2+)-binding site is contributed by Asp144. Residues 145 to 146 (GA), Asn173, Tyr281, and Glu360 each bind thiamine diphosphate. Position 173 (Asn173) interacts with Mg(2+).

Belongs to the transketolase family. DXPS subfamily. Homodimer. Mg(2+) serves as cofactor. Thiamine diphosphate is required as a cofactor.

It carries out the reaction D-glyceraldehyde 3-phosphate + pyruvate + H(+) = 1-deoxy-D-xylulose 5-phosphate + CO2. Its pathway is metabolic intermediate biosynthesis; 1-deoxy-D-xylulose 5-phosphate biosynthesis; 1-deoxy-D-xylulose 5-phosphate from D-glyceraldehyde 3-phosphate and pyruvate: step 1/1. Its function is as follows. Catalyzes the acyloin condensation reaction between C atoms 2 and 3 of pyruvate and glyceraldehyde 3-phosphate to yield 1-deoxy-D-xylulose-5-phosphate (DXP). This is 1-deoxy-D-xylulose-5-phosphate synthase from Thermus thermophilus (strain ATCC BAA-163 / DSM 7039 / HB27).